Consider the following 153-residue polypeptide: Xanthine-guanine phosphoribosyltransferase (153 aa).

5-phospho-alpha-D-ribose 1-diphosphate-binding positions include 37–38 (RG), Arg-69, and 88–96 (DDLVDTGGT). Residue Arg-69 participates in GMP binding. Asp-89 is a Mg(2+) binding site. Guanine contacts are provided by Asp-92 and Ile-135. Xanthine-binding residues include Asp-92 and Ile-135. Residues 92 to 96 (DTGGT) and 134 to 135 (WI) each bind GMP.

This sequence belongs to the purine/pyrimidine phosphoribosyltransferase family. XGPT subfamily. In terms of assembly, homotetramer. Mg(2+) serves as cofactor.

It is found in the cell membrane. It catalyses the reaction GMP + diphosphate = guanine + 5-phospho-alpha-D-ribose 1-diphosphate. It carries out the reaction XMP + diphosphate = xanthine + 5-phospho-alpha-D-ribose 1-diphosphate. The catalysed reaction is IMP + diphosphate = hypoxanthine + 5-phospho-alpha-D-ribose 1-diphosphate. It participates in purine metabolism; GMP biosynthesis via salvage pathway; GMP from guanine: step 1/1. The protein operates within purine metabolism; XMP biosynthesis via salvage pathway; XMP from xanthine: step 1/1. Its function is as follows. Purine salvage pathway enzyme that catalyzes the transfer of the ribosyl-5-phosphate group from 5-phospho-alpha-D-ribose 1-diphosphate (PRPP) to the N9 position of the 6-oxopurines guanine and xanthine to form the corresponding ribonucleotides GMP (guanosine 5'-monophosphate) and XMP (xanthosine 5'-monophosphate), with the release of PPi. To a lesser extent, also acts on hypoxanthine. The protein is Xanthine-guanine phosphoribosyltransferase of Buchnera aphidicola subsp. Baizongia pistaciae (strain Bp).